The sequence spans 251 residues: Acidic leucine-rich nuclear phosphoprotein 32 family member B (251 aa).

LRR repeat units follow at residues 16–40 (PAAVRELVLDNCKSNDGKIEGLTAE), 43–64 (NLEFLSLINVGLISVSNLPKLP), and 65–84 (KLKKLELSENRIFGGLDMLA). An N6-acetyllysine modification is found at K86. Residues 89 to 110 (NLTHLNLSGNKLKDISTLEPLK) form an LRR 4 repeat. The LRRCT domain maps to 123–161 (CEVTNLNDYRESVFKLLPQLTYLDGYDREDQEAPDSDAE). Positions 149 to 233 (DREDQEAPDS…DEDEDEEEEE (85 aa)) are enriched in acidic residues. Positions 149 to 251 (DREDQEAPDS…RETDDEGEDD (103 aa)) are disordered. The residue at position 158 (S158) is a Phosphoserine. The segment covering 234-244 (GGKGEKRKRET) has biased composition (basic and acidic residues). A Nuclear localization signal motif is present at residues 239–242 (KRKR). T244 carries the phosphothreonine modification.

This sequence belongs to the ANP32 family. Interacts with histones H3 and H4. Interacts with KLF5; this interaction induces promoter region-specific histone incorporation and inhibition of histone acetylation by ANP32B. As to quaternary structure, (Microbial infection) Interacts with Sendai virus protein M. In terms of assembly, (Microbial infection) Interacts with Measles virus protein M. (Microbial infection) Interacts with Hendra virus protein M; this interaction promotes nuclear localization of M. As to quaternary structure, (Microbial infection) Interacts with influenza virus B protein PB2; this interaction strongly supports influenza B virus replication. Post-translationally, some glutamate residues are glycylated by TTLL8. This modification occurs exclusively on glutamate residues and results in a glycine chain on the gamma-carboxyl group. In terms of processing, directly cleaved by caspase-3/CASP3. As to expression, expressed in heart, lung, pancreas, prostate and in spleen, thymus and placenta.

The protein localises to the nucleus. It localises to the cytoplasm. Its function is as follows. Multifunctional protein that is involved in the regulation of many processes including cell proliferation, apoptosis, cell cycle progression or transcription. Regulates the proliferation of neuronal stem cells, differentiation of leukemic cells and progression from G1 to S phase of the cell cycle. As negative regulator of caspase-3-dependent apoptosis, may act as an antagonist of ANP32A in regulating tissue homeostasis. Exhibits histone chaperone properties, able to recruit histones to certain promoters, thus regulating the transcription of specific genes. Also plays an essential role in the nucleocytoplasmic transport of specific mRNAs via the uncommon nuclear mRNA export receptor XPO1/CRM1. Participates in the regulation of adequate adaptive immune responses by acting on mRNA expression and cell proliferation. (Microbial infection) Plays an essential role in influenza A and B viral genome replication. Also plays a role in foamy virus mRNA export from the nucleus to the cytoplasm. This Homo sapiens (Human) protein is Acidic leucine-rich nuclear phosphoprotein 32 family member B (ANP32B).